The following is a 289-amino-acid chain: ATP synthase gamma chain (289 aa).

It belongs to the ATPase gamma chain family. In terms of assembly, F-type ATPases have 2 components, CF(1) - the catalytic core - and CF(0) - the membrane proton channel. CF(1) has five subunits: alpha(3), beta(3), gamma(1), delta(1), epsilon(1). CF(0) has three main subunits: a, b and c.

The protein localises to the cell inner membrane. In terms of biological role, produces ATP from ADP in the presence of a proton gradient across the membrane. The gamma chain is believed to be important in regulating ATPase activity and the flow of protons through the CF(0) complex. The chain is ATP synthase gamma chain from Cereibacter sphaeroides (strain ATCC 17023 / DSM 158 / JCM 6121 / CCUG 31486 / LMG 2827 / NBRC 12203 / NCIMB 8253 / ATH 2.4.1.) (Rhodobacter sphaeroides).